We begin with the raw amino-acid sequence, 338 residues long: Glycerol-3-phosphate dehydrogenase [NAD(P)+] (338 aa).

Residues serine 13, tryptophan 14, and lysine 108 each contribute to the NADPH site. Sn-glycerol 3-phosphate-binding residues include lysine 108, glycine 139, and serine 141. Alanine 143 contacts NADPH. The sn-glycerol 3-phosphate site is built by lysine 194, aspartate 247, serine 257, arginine 258, and asparagine 259. Catalysis depends on lysine 194, which acts as the Proton acceptor. An NADPH-binding site is contributed by arginine 258. 2 residues coordinate NADPH: valine 282 and glutamate 284.

Belongs to the NAD-dependent glycerol-3-phosphate dehydrogenase family.

It is found in the cytoplasm. It carries out the reaction sn-glycerol 3-phosphate + NAD(+) = dihydroxyacetone phosphate + NADH + H(+). The catalysed reaction is sn-glycerol 3-phosphate + NADP(+) = dihydroxyacetone phosphate + NADPH + H(+). Its pathway is membrane lipid metabolism; glycerophospholipid metabolism. Its function is as follows. Catalyzes the reduction of the glycolytic intermediate dihydroxyacetone phosphate (DHAP) to sn-glycerol 3-phosphate (G3P), the key precursor for phospholipid synthesis. The protein is Glycerol-3-phosphate dehydrogenase [NAD(P)+] of Listeria innocua serovar 6a (strain ATCC BAA-680 / CLIP 11262).